Consider the following 260-residue polypeptide: Ubiquinone/menaquinone biosynthesis C-methyltransferase UbiE (260 aa).

S-adenosyl-L-methionine-binding positions include Thr-83, Asp-104, 132–133, and Ser-149; that span reads NA.

The protein belongs to the class I-like SAM-binding methyltransferase superfamily. MenG/UbiE family.

The enzyme catalyses a 2-demethylmenaquinol + S-adenosyl-L-methionine = a menaquinol + S-adenosyl-L-homocysteine + H(+). It carries out the reaction a 2-methoxy-6-(all-trans-polyprenyl)benzene-1,4-diol + S-adenosyl-L-methionine = a 5-methoxy-2-methyl-3-(all-trans-polyprenyl)benzene-1,4-diol + S-adenosyl-L-homocysteine + H(+). It functions in the pathway quinol/quinone metabolism; menaquinone biosynthesis; menaquinol from 1,4-dihydroxy-2-naphthoate: step 2/2. Its pathway is cofactor biosynthesis; ubiquinone biosynthesis. Its function is as follows. Methyltransferase required for the conversion of demethylmenaquinol (DMKH2) to menaquinol (MKH2) and the conversion of 2-polyprenyl-6-methoxy-1,4-benzoquinol (DDMQH2) to 2-polyprenyl-3-methyl-6-methoxy-1,4-benzoquinol (DMQH2). The protein is Ubiquinone/menaquinone biosynthesis C-methyltransferase UbiE of Vibrio cholerae serotype O1 (strain ATCC 39315 / El Tor Inaba N16961).